Reading from the N-terminus, the 387-residue chain is 3-ketoacyl-CoA thiolase (387 aa).

The Acyl-thioester intermediate role is filled by Cys91. Active-site proton acceptor residues include His343 and Cys373.

It belongs to the thiolase-like superfamily. Thiolase family. In terms of assembly, heterotetramer of two alpha chains (FadB) and two beta chains (FadA).

Its subcellular location is the cytoplasm. The catalysed reaction is an acyl-CoA + acetyl-CoA = a 3-oxoacyl-CoA + CoA. It functions in the pathway lipid metabolism; fatty acid beta-oxidation. Functionally, catalyzes the final step of fatty acid oxidation in which acetyl-CoA is released and the CoA ester of a fatty acid two carbons shorter is formed. The sequence is that of 3-ketoacyl-CoA thiolase from Salmonella choleraesuis (strain SC-B67).